Here is a 154-residue protein sequence, read N- to C-terminus: Ribonuclease H (154 aa).

The region spanning 1–142 (MTKQVEIFTD…CDELAREGAN (142 aa)) is the RNase H type-1 domain. Mg(2+)-binding residues include aspartate 10, glutamate 48, aspartate 70, and aspartate 134.

It belongs to the RNase H family. As to quaternary structure, monomer. Mg(2+) is required as a cofactor.

It localises to the cytoplasm. The enzyme catalyses Endonucleolytic cleavage to 5'-phosphomonoester.. In terms of biological role, endonuclease that specifically degrades the RNA of RNA-DNA hybrids. The chain is Ribonuclease H from Yersinia enterocolitica serotype O:8 / biotype 1B (strain NCTC 13174 / 8081).